A 264-amino-acid chain; its full sequence is 5'-nucleotidase SurE (264 aa).

The a divalent metal cation site is built by Asp10, Asp11, Ser43, and Asn99.

Belongs to the SurE nucleotidase family. A divalent metal cation is required as a cofactor.

Its subcellular location is the cytoplasm. The catalysed reaction is a ribonucleoside 5'-phosphate + H2O = a ribonucleoside + phosphate. Nucleotidase that shows phosphatase activity on nucleoside 5'-monophosphates. In Methanococcus maripaludis (strain C6 / ATCC BAA-1332), this protein is 5'-nucleotidase SurE.